Here is a 190-residue protein sequence, read N- to C-terminus: Small ribosomal subunit protein eS7x (190 aa).

N-acetylmethionine is present on methionine 1. The stretch at 17–50 forms a coiled coil; it reads TECEEQVAQALFDLENTNQELKSELKDLYINQAV.

It belongs to the eukaryotic ribosomal protein eS7 family.

This Arabidopsis thaliana (Mouse-ear cress) protein is Small ribosomal subunit protein eS7x (RPS7C).